We begin with the raw amino-acid sequence, 444 residues long: UDP-N-acetylglucosamine 1-carboxyvinyltransferase (444 aa).

Phosphoenolpyruvate is bound at residue 22-23 (KN). UDP-N-acetyl-alpha-D-glucosamine is bound at residue Arg94. Catalysis depends on Asp119, which acts as the Proton donor. Asp309 and Val331 together coordinate UDP-N-acetyl-alpha-D-glucosamine.

The protein belongs to the EPSP synthase family. MurA subfamily.

The protein resides in the cytoplasm. The catalysed reaction is phosphoenolpyruvate + UDP-N-acetyl-alpha-D-glucosamine = UDP-N-acetyl-3-O-(1-carboxyvinyl)-alpha-D-glucosamine + phosphate. It participates in cell wall biogenesis; peptidoglycan biosynthesis. Cell wall formation. Adds enolpyruvyl to UDP-N-acetylglucosamine. The polypeptide is UDP-N-acetylglucosamine 1-carboxyvinyltransferase (Chlamydia trachomatis serovar D (strain ATCC VR-885 / DSM 19411 / UW-3/Cx)).